The sequence spans 451 residues: UDP-N-acetylmuramate--L-alanine ligase (451 aa).

110 to 116 is an ATP binding site; that stretch reads GTHGKTT.

The protein belongs to the MurCDEF family.

The protein localises to the cytoplasm. It carries out the reaction UDP-N-acetyl-alpha-D-muramate + L-alanine + ATP = UDP-N-acetyl-alpha-D-muramoyl-L-alanine + ADP + phosphate + H(+). Its pathway is cell wall biogenesis; peptidoglycan biosynthesis. Functionally, cell wall formation. In Francisella tularensis subsp. mediasiatica (strain FSC147), this protein is UDP-N-acetylmuramate--L-alanine ligase.